Here is a 307-residue protein sequence, read N- to C-terminus: Taste receptor type 2 member 41 (307 aa).

The Extracellular segment spans residues 1-7; the sequence is MQAALTA. A helical membrane pass occupies residues 8–28; sequence FFMLFFSLLSLLGIAANGFIV. The Cytoplasmic portion of the chain corresponds to 29–40; that stretch reads LVLGREWLQYGR. A helical transmembrane segment spans residues 41-61; that stretch reads LLPLDMILISLGVSRFCLQLV. The Extracellular portion of the chain corresponds to 62 to 88; the sequence is GTVYNFYYSAHKVEYSGGLSRQFFHLH. The helical transmembrane segment at 89–109 threads the bilayer; the sequence is WHFLNLATFXFCSWLSVLFCV. The Cytoplasmic portion of the chain corresponds to 110–129; the sequence is KXANITHPTFLWLKWRFPGW. Residues 130–150 traverse the membrane as a helical segment; the sequence is VPWLLLGSVLISFIITLLLFW. Topologically, residues 151 to 183 are extracellular; the sequence is VNYPVYQEFLIRKFSGNMTYEWNTRIEMYYLPS. An N-linked (GlcNAc...) asparagine glycan is attached at asparagine 167. The helical transmembrane segment at 184–204 threads the bilayer; that stretch reads LKLVIWSIPCSVFLVSIMLLI. The Cytoplasmic segment spans residues 205-234; the sequence is NSLRRHTWRMQHNGHSLQDPSTQAHTRAXK. The helical transmembrane segment at 235-255 threads the bilayer; the sequence is SLISFLILYVLSFLSLIIDAT. The Extracellular segment spans residues 256 to 264; the sequence is KFISMQNDF. The chain crosses the membrane as a helical span at residues 265-285; the sequence is YWPWQTAVYLGVSVHPFILIF. The Cytoplasmic portion of the chain corresponds to 286–307; that stretch reads SNLKLRSVFWKLLLLARGFWVA.

It belongs to the G-protein coupled receptor T2R family.

Its subcellular location is the membrane. Its function is as follows. Receptor that may play a role in the perception of bitterness and is gustducin-linked. May play a role in sensing the chemical composition of the gastrointestinal content. The activity of this receptor may stimulate alpha gustducin, mediate PLC-beta-2 activation and lead to the gating of TRPM5. This Pongo pygmaeus (Bornean orangutan) protein is Taste receptor type 2 member 41 (TAS2R41).